The sequence spans 398 residues: Minor cardiolipin synthase ClsB (398 aa).

The chain crosses the membrane as a helical span at residues 3-23 (VFIVIMIIVVIFFALILLDIF). 2 PLD phosphodiesterase domains span residues 141-168 (MQKR…AEEY) and 311-338 (YQGF…DKRS).

It belongs to the phospholipase D family. Cardiolipin synthase subfamily.

Its subcellular location is the cell membrane. In terms of biological role, involved in the biosynthesis of cardiolipin. The chain is Minor cardiolipin synthase ClsB (clsB) from Bacillus subtilis (strain 168).